The sequence spans 403 residues: PP2A regulatory subunit TAP46 (403 aa).

Disordered regions lie at residues 158 to 184 and 351 to 403; these read ERRG…LDDD and ANSS…TPCG. Composition is skewed to acidic residues over residues 174–184 and 366–375; these read ETEEDDVLDDD and EDDEEDDDDA. Basic and acidic residues predominate over residues 376–391; that stretch reads AQDKARAWDDWKDDNP.

It belongs to the IGBP1/TAP42 family.

In terms of biological role, involved in the regulation of the TOR signaling pathway. Seems to act as a regulator of PP2A catalytic activity. The sequence is that of PP2A regulatory subunit TAP46 from Nicotiana tabacum (Common tobacco).